The primary structure comprises 347 residues: Photosystem II protein D1 (347 aa).

Transmembrane regions (helical) follow at residues 31–48, 120–135, and 144–158; these read YIGWFGIFMFPLTGLAII, HFIGGVSSWMGREWEF, and WIYLAFSAPLVAATA. Histidine 120 is a binding site for chlorophyll a. Tryptophan 128 provides a ligand contact to pheophytin a. [CaMn4O5] cluster is bound by residues aspartate 172 and glutamate 191. The helical transmembrane segment at 199–220 threads the bilayer; the sequence is FHILGVAGVFGGSLFSAMHGSL. Histidine 200 lines the chlorophyll a pocket. Residues histidine 217 and 266–267 contribute to the a quinone site; that span reads SF. Histidine 217 provides a ligand contact to Fe cation. Histidine 274 is a Fe cation binding site. A helical transmembrane segment spans residues 276-290; the sequence is FLAAWPVIGIWFTAL. Residues histidine 334, glutamate 335, and aspartate 344 each contribute to the [CaMn4O5] cluster site.

This sequence belongs to the reaction center PufL/M/PsbA/D family. In terms of assembly, PSII is composed of 1 copy each of membrane proteins PsbA, PsbB, PsbC, PsbD, PsbE, PsbF, PsbH, PsbI, PsbJ, PsbK, PsbL, PsbM, PsbT, PsbX, PsbY, PsbZ, Psb30/Ycf12, at least 3 peripheral proteins of the oxygen-evolving complex and a large number of cofactors. It forms dimeric complexes. The D1/D2 heterodimer binds P680, chlorophylls that are the primary electron donor of PSII, and subsequent electron acceptors. It shares a non-heme iron and each subunit binds pheophytin, quinone, additional chlorophylls, carotenoids and lipids. D1 provides most of the ligands for the Mn4-Ca-O5 cluster of the oxygen-evolving complex (OEC). There is also a Cl(-1) ion associated with D1 and D2, which is required for oxygen evolution. The PSII complex binds additional chlorophylls, carotenoids and specific lipids. serves as cofactor. Post-translationally, tyr-163 forms a radical intermediate that is referred to as redox-active TyrZ, YZ or Y-Z.

The protein resides in the plastid. The protein localises to the chloroplast thylakoid membrane. The catalysed reaction is 2 a plastoquinone + 4 hnu + 2 H2O = 2 a plastoquinol + O2. In terms of biological role, photosystem II (PSII) is a light-driven water:plastoquinone oxidoreductase that uses light energy to abstract electrons from H(2)O, generating O(2) and a proton gradient subsequently used for ATP formation. It consists of a core antenna complex that captures photons, and an electron transfer chain that converts photonic excitation into a charge separation. The D1/D2 (PsbA/PsbD) reaction center heterodimer binds P680, the primary electron donor of PSII as well as several subsequent electron acceptors. In Alexandrium tamarense (Red tide dinoflagellate), this protein is Photosystem II protein D1.